A 485-amino-acid chain; its full sequence is Auxin transporter protein 1 (485 aa).

Over 1–59 the chain is Cytoplasmic; that stretch reads MSEGVEAIVANDNGTDQVNGNRTGKDNEEHDGSTGSNLSNFLWHGGSVWDAWFSCASNQ. Residues 12-22 are compositionally biased toward polar residues; sequence DNGTDQVNGNR. A disordered region spans residues 12–33; the sequence is DNGTDQVNGNRTGKDNEEHDGS. A compositionally biased stretch (basic and acidic residues) spans 23–32; it reads TGKDNEEHDG. The helical transmembrane segment at 60–77 threads the bilayer; it reads VAQVLLTLPYSFSQLGML. Topologically, residues 78–79 are extracellular; it reads SG. The chain crosses the membrane as a helical span at residues 80-100; sequence IVLQIFYGLLGSWTAYLISVL. The Cytoplasmic segment spans residues 101 to 135; that stretch reads YVEYRARKEKEGKSFKNHVIQWFEVLDGLLGSYWK. The chain crosses the membrane as a helical span at residues 136 to 156; the sequence is ALGLAFNCTFLLFGSVIQLIA. At 157–172 the chain is on the extracellular side; the sequence is CASNIYYINDHLDKRT. A helical membrane pass occupies residues 173–193; it reads WTYIFGACCATTVFIPSFHNY. At 194-196 the chain is on the cytoplasmic side; sequence RIW. A helical transmembrane segment spans residues 197–217; sequence SFLGLGMTTYTAWYLAIASII. The Extracellular portion of the chain corresponds to 218–232; sequence HGQAEGVKHSGPTKL. A helical membrane pass occupies residues 233–253; that stretch reads VLYFTGATNILYTFGGHAVTV. At 254-266 the chain is on the cytoplasmic side; it reads EIMHAMWKPQKFK. A helical transmembrane segment spans residues 267–287; sequence YIYLMATLYVFTLTIPSAAAV. Over 288-314 the chain is Extracellular; sequence YWAFGDALLDHSNAFSLMPKNAWRDAA. A helical membrane pass occupies residues 315–335; the sequence is VILMLIHQFITFGFACTPLYF. At 336 to 356 the chain is on the cytoplasmic side; sequence VWEKVIGMHDTKSICLRALAR. A helical membrane pass occupies residues 357–377; it reads LPVVIPIWFLAIIFPFFGPIN. Position 378 (Ser378) is a topological domain, extracellular. A helical membrane pass occupies residues 379 to 399; that stretch reads AVGALLVSFTVYIIPSLAHML. At 400 to 425 the chain is on the cytoplasmic side; sequence TYRSASARQNAAEKPPFFMPSWTAMY. The chain crosses the membrane as a helical span at residues 426–446; sequence VLNAFVVVWVLIVGFGFGGWA. At 447–485 the chain is on the extracellular side; sequence SVTNFVRQVDTFGLFAKCYQCKPAAAAAHAPVSALHHRL.

This sequence belongs to the amino acid/polyamine transporter 2 family. Amino acid/auxin permease (AAAP) (TC 2.A.18.1) subfamily. As to expression, expressed in root and shoot apical tissues. In root apex, confined to stele initials, protophloem poles, statolith-containing S2 columella cells, lateral root cap cells (LRC), and in epidermal cells from the distal elongation zone (DEZ) up to central elongation zone (CEZ).

Its subcellular location is the cell membrane. With respect to regulation, auxin uptake mediated by AUX1 is inhibited by chromosaponin-1 (CSI), 1-naphthoxyacetic acid (1-NOA) and 3-chloro-4-hydroxyphenylacetic acid (CHPAA). In terms of biological role, carrier protein involved in proton-driven auxin influx. Mediates the formation of auxin gradient from developing leaves (site of auxin biosynthesis) to tips by contributing to the loading of auxin in vascular tissues and facilitating acropetal (base to tip) auxin transport within inner tissues of the root apex, and basipetal (tip to base) auxin transport within outer tissues of the root apex. Unloads auxin from the mature phloem to deliver the hormone to the root meristem via the protophloem cell files. Coordinated subcellular localization of AUX1 is regulated by a brefeldin A-sensitive (BFA) vesicle trafficking process. Involved in lateral root formation, trichoblast polarization and root hair elongation. Required for gravitropism and thigmotropism, especially in roots, by modulating responses to auxin, ethylene and cytokinins such as benzyladenine (BA). Needed for ammonium-mediated root-growth inhibition. Confers sensitivity to the herbicide 2,4-dichlorophenoxyacetic acid (2,4-D, auxin analog), and to polar auxin transport inhibitors such as N-1-naphthylphthalamic acid (NPA) and 2,3,5-triiodobenzoic acid (TIBA). This Arabidopsis thaliana (Mouse-ear cress) protein is Auxin transporter protein 1 (AUX1).